Reading from the N-terminus, the 504-residue chain is Arabinose import ATP-binding protein AraG (504 aa).

ABC transporter domains lie at 8 to 243 and 256 to 499; these read LSFR…MVGR and YGEE…MPKV. Residue 40 to 47 coordinates ATP; the sequence is GENGAGKS.

Belongs to the ABC transporter superfamily. Arabinose importer (TC 3.A.1.2.2) family. In terms of assembly, the complex is composed of two ATP-binding proteins (AraG), two transmembrane proteins (AraH) and a solute-binding protein (AraF).

The protein localises to the cell inner membrane. The catalysed reaction is L-arabinose(out) + ATP + H2O = L-arabinose(in) + ADP + phosphate + H(+). Its function is as follows. Part of the ABC transporter complex AraFGH involved in arabinose import. Responsible for energy coupling to the transport system. The polypeptide is Arabinose import ATP-binding protein AraG (Escherichia coli O6:K15:H31 (strain 536 / UPEC)).